Here is a 461-residue protein sequence, read N- to C-terminus: Bifunctional protein GlmU (461 aa).

Positions 1–227 (MEVIALILAA…PDEVLGVNDR (227 aa)) are pyrophosphorylase. UDP-N-acetyl-alpha-D-glucosamine is bound by residues 8–11 (LAAG), lysine 22, glutamine 73, 78–79 (GT), 100–102 (YGD), glycine 137, glutamate 152, asparagine 167, and asparagine 225. Aspartate 102 lines the Mg(2+) pocket. Asparagine 225 provides a ligand contact to Mg(2+). The linker stretch occupies residues 228-248 (RQLAELERIYQVHQARALMER). The N-acetyltransferase stretch occupies residues 249–461 (GVTLRDPARF…EKARKESCAE (213 aa)). Residues arginine 332 and lysine 350 each coordinate UDP-N-acetyl-alpha-D-glucosamine. Histidine 362 serves as the catalytic Proton acceptor. Tyrosine 365 and asparagine 376 together coordinate UDP-N-acetyl-alpha-D-glucosamine. Residues alanine 379, 385–386 (NY), serine 404, alanine 422, and arginine 439 each bind acetyl-CoA.

The protein in the N-terminal section; belongs to the N-acetylglucosamine-1-phosphate uridyltransferase family. It in the C-terminal section; belongs to the transferase hexapeptide repeat family. In terms of assembly, homotrimer. Requires Mg(2+) as cofactor.

The protein resides in the cytoplasm. The catalysed reaction is alpha-D-glucosamine 1-phosphate + acetyl-CoA = N-acetyl-alpha-D-glucosamine 1-phosphate + CoA + H(+). It carries out the reaction N-acetyl-alpha-D-glucosamine 1-phosphate + UTP + H(+) = UDP-N-acetyl-alpha-D-glucosamine + diphosphate. Its pathway is nucleotide-sugar biosynthesis; UDP-N-acetyl-alpha-D-glucosamine biosynthesis; N-acetyl-alpha-D-glucosamine 1-phosphate from alpha-D-glucosamine 6-phosphate (route II): step 2/2. It functions in the pathway nucleotide-sugar biosynthesis; UDP-N-acetyl-alpha-D-glucosamine biosynthesis; UDP-N-acetyl-alpha-D-glucosamine from N-acetyl-alpha-D-glucosamine 1-phosphate: step 1/1. It participates in bacterial outer membrane biogenesis; LPS lipid A biosynthesis. Functionally, catalyzes the last two sequential reactions in the de novo biosynthetic pathway for UDP-N-acetylglucosamine (UDP-GlcNAc). The C-terminal domain catalyzes the transfer of acetyl group from acetyl coenzyme A to glucosamine-1-phosphate (GlcN-1-P) to produce N-acetylglucosamine-1-phosphate (GlcNAc-1-P), which is converted into UDP-GlcNAc by the transfer of uridine 5-monophosphate (from uridine 5-triphosphate), a reaction catalyzed by the N-terminal domain. The chain is Bifunctional protein GlmU from Methylococcus capsulatus (strain ATCC 33009 / NCIMB 11132 / Bath).